Consider the following 493-residue polypeptide: Probable cytochrome P450 313a2 (493 aa).

C438 serves as a coordination point for heme.

Belongs to the cytochrome P450 family. Requires heme as cofactor.

Its subcellular location is the endoplasmic reticulum membrane. It is found in the microsome membrane. Its function is as follows. May be involved in the metabolism of insect hormones and in the breakdown of synthetic insecticides. This is Probable cytochrome P450 313a2 (Cyp313a2) from Drosophila melanogaster (Fruit fly).